Reading from the N-terminus, the 235-residue chain is Uridylate kinase (235 aa).

9-12 (KLSG) contacts ATP. Gly-51 lines the UMP pocket. Gly-52 and Arg-56 together coordinate ATP. Residues Asp-71 and 132 to 139 (TGNPYFTT) each bind UMP. Thr-159, Tyr-165, and Asp-168 together coordinate ATP.

It belongs to the UMP kinase family. As to quaternary structure, homohexamer.

It localises to the cytoplasm. It catalyses the reaction UMP + ATP = UDP + ADP. Its pathway is pyrimidine metabolism; CTP biosynthesis via de novo pathway; UDP from UMP (UMPK route): step 1/1. With respect to regulation, inhibited by UTP. Its function is as follows. Catalyzes the reversible phosphorylation of UMP to UDP. This Cytophaga hutchinsonii (strain ATCC 33406 / DSM 1761 / CIP 103989 / NBRC 15051 / NCIMB 9469 / D465) protein is Uridylate kinase.